The following is a 185-amino-acid chain: Ribosome-recycling factor (185 aa).

This sequence belongs to the RRF family.

It is found in the cytoplasm. Responsible for the release of ribosomes from messenger RNA at the termination of protein biosynthesis. May increase the efficiency of translation by recycling ribosomes from one round of translation to another. The protein is Ribosome-recycling factor of Treponema denticola (strain ATCC 35405 / DSM 14222 / CIP 103919 / JCM 8153 / KCTC 15104).